The primary structure comprises 812 residues: Phospholipase D alpha 1 (812 aa).

In terms of domain architecture, C2 spans 1–130 (MAQILLHGTL…LGGEEIDKWL (130 aa)). Asp190 contacts Ca(2+). A PLD phosphodiesterase 1 domain is found at 330-368 (TMFTHHQKIVVVDHEMPNQGSQQRRIVSFIGGIDLCDGR). Catalysis depends on residues His335, Lys337, and Asp342. An a 1,2-diacyl-sn-glycero-3-phosphate-binding site is contributed by His335. Positions 374 and 408 each coordinate Ca(2+). A 1,2-diacyl-sn-glycero-3-phosphate-binding residues include Gln524 and His663. Positions 658–685 (FMIYVHTKMMIVDDEYIIIGSANINQRS) constitute a PLD phosphodiesterase 2 domain. Active-site residues include His663, Lys665, and Asp670. Residue Glu724 participates in Ca(2+) binding.

Belongs to the phospholipase D family. C2-PLD subfamily. Monomer. Requires Ca(2+) as cofactor.

It carries out the reaction a 1,2-diacyl-sn-glycero-3-phosphocholine + H2O = a 1,2-diacyl-sn-glycero-3-phosphate + choline + H(+). Functionally, hydrolyzes glycerol-phospholipids at the terminal phosphodiesteric bond. Plays an important role in various cellular processes. This Zea mays (Maize) protein is Phospholipase D alpha 1 (PLD1).